Reading from the N-terminus, the 124-residue chain is Ribonuclease pancreatic (124 aa).

Basic and acidic residues predominate over residues 1–13 (KETAAAKFERQHM). The disordered stretch occupies residues 1-22 (KETAAAKFERQHMDSSTSAASS). Substrate contacts are provided by K7 and R10. The active-site Proton acceptor is the H12. Intrachain disulfides connect C26-C84, C40-C95, C58-C110, and C65-C72. N-linked (GlcNAc...) asparagine glycosylation occurs at N34. Substrate-binding positions include 41–45 (KPVNT), K66, and R85. Catalysis depends on H119, which acts as the Proton donor.

This sequence belongs to the pancreatic ribonuclease family. In terms of assembly, monomer. Interacts with and forms tight 1:1 complexes with RNH1. Dimerization of two such complexes may occur. Interaction with RNH1 inhibits this protein. Pancreas.

Its subcellular location is the secreted. The catalysed reaction is an [RNA] containing cytidine + H2O = an [RNA]-3'-cytidine-3'-phosphate + a 5'-hydroxy-ribonucleotide-3'-[RNA].. It carries out the reaction an [RNA] containing uridine + H2O = an [RNA]-3'-uridine-3'-phosphate + a 5'-hydroxy-ribonucleotide-3'-[RNA].. Its function is as follows. Endonuclease that catalyzes the cleavage of RNA on the 3' side of pyrimidine nucleotides. Acts on single-stranded and double-stranded RNA. This is Ribonuclease pancreatic (RNASE1) from Bison bison (American bison).